The primary structure comprises 85 residues: Toxin To6 (85 aa).

A signal peptide spans 1-20; sequence MSIFPIILALLLIGLDEGEA. Residues 21–83 enclose the LCN-type CS-alpha/beta domain; that stretch reads LDGYPLSKNN…EMYPGRLPCN (63 aa). 4 cysteine pairs are disulfide-bonded: cysteine 32-cysteine 82, cysteine 36-cysteine 59, cysteine 42-cysteine 64, and cysteine 46-cysteine 66.

Expressed by the venom gland.

Its subcellular location is the secreted. Beta toxins bind voltage-independently at site-4 of sodium channels (Nav) and shift the voltage of activation toward more negative potentials thereby affecting sodium channel activation and promoting spontaneous and repetitive firing. The protein is Toxin To6 of Tityus obscurus (Amazonian scorpion).